The sequence spans 249 residues: Triosephosphate isomerase (249 aa).

The substrate site is built by asparagine 12 and lysine 14. At lysine 14 the chain carries N6-acetyllysine. 3'-nitrotyrosine is present on tyrosine 68. Phosphoserine occurs at positions 80 and 106. Lysine 142 participates in a covalent cross-link: Glycyl lysine isopeptide (Lys-Gly) (interchain with G-Cter in SUMO1). An N6-succinyllysine modification is found at lysine 149. Lysine 156 bears the N6-acetyllysine; alternate mark. The residue at position 156 (lysine 156) is an N6-succinyllysine; alternate. Position 159 is a phosphoserine (serine 159). The active-site Proton acceptor is glutamate 166. The residue at position 173 (threonine 173) is a Phosphothreonine. N6-acetyllysine; alternate is present on lysine 194. Residue lysine 194 is modified to N6-succinyllysine; alternate. An N6-methyllysine; alternate modification is found at lysine 194. Residue serine 198 is modified to Phosphoserine. At tyrosine 209 the chain carries 3'-nitrotyrosine. Residue serine 212 is modified to Phosphoserine. The residue at position 214 (threonine 214) is a Phosphothreonine. Serine 223 carries the post-translational modification Phosphoserine. Lysine 238 carries the N6-acetyllysine modification.

This sequence belongs to the triosephosphate isomerase family. Homodimer.

The protein localises to the cytoplasm. The catalysed reaction is D-glyceraldehyde 3-phosphate = dihydroxyacetone phosphate. It catalyses the reaction dihydroxyacetone phosphate = methylglyoxal + phosphate. The protein operates within carbohydrate biosynthesis; gluconeogenesis. Its pathway is carbohydrate degradation; glycolysis; D-glyceraldehyde 3-phosphate from glycerone phosphate: step 1/1. Its function is as follows. Triosephosphate isomerase is an extremely efficient metabolic enzyme that catalyzes the interconversion between dihydroxyacetone phosphate (DHAP) and D-glyceraldehyde-3-phosphate (G3P) in glycolysis and gluconeogenesis. It is also responsible for the non-negligible production of methylglyoxal a reactive cytotoxic side-product that modifies and can alter proteins, DNA and lipids. This chain is Triosephosphate isomerase, found in Mesocricetus auratus (Golden hamster).